Consider the following 548-residue polypeptide: Adenine deaminase (548 aa).

This sequence belongs to the metallo-dependent hydrolases superfamily. Adenine deaminase family. Requires Mn(2+) as cofactor.

It catalyses the reaction adenine + H2O + H(+) = hypoxanthine + NH4(+). The protein is Adenine deaminase of Borreliella burgdorferi (strain ATCC 35210 / DSM 4680 / CIP 102532 / B31) (Borrelia burgdorferi).